Here is a 377-residue protein sequence, read N- to C-terminus: Dehydrogenase/reductase SDR family member 13 (377 aa).

Positions 1–25 are cleaved as a signal peptide; sequence MEALLLGVGLLLGAYVLVYYNLVKA. NAD(+) contacts are provided by Ser46 and Ile48. Ser170 contacts substrate. The NAD(+) site is built by Tyr197, Lys201, and Ser232. The active-site Proton acceptor is Tyr197. The segment at 310–363 is disordered; the sequence is LAGLGPGEDAESDEDSQPEDPGTPSSPSSPHPEEPTVSELYPSPQSSTDRSTVT. The segment covering 317–327 has biased composition (acidic residues); the sequence is EDAESDEDSQP. The span at 328–337 shows a compositional bias: low complexity; it reads EDPGTPSSPS. Polar residues predominate over residues 352–363; it reads SPQSSTDRSTVT.

The protein belongs to the short-chain dehydrogenases/reductases (SDR) family.

The protein localises to the secreted. Functionally, putative oxidoreductase. This Bos taurus (Bovine) protein is Dehydrogenase/reductase SDR family member 13 (DHRS13).